The sequence spans 240 residues: UPF0173 metal-dependent hydrolase OE_2513F (240 aa).

This sequence belongs to the UPF0173 family.

The polypeptide is UPF0173 metal-dependent hydrolase OE_2513F (Halobacterium salinarum (strain ATCC 29341 / DSM 671 / R1)).